The following is a 170-amino-acid chain: Large ribosomal subunit protein uL5 (170 aa).

It belongs to the universal ribosomal protein uL5 family. Component of the large ribosomal subunit.

Its subcellular location is the nucleus. The protein resides in the cytoplasm. Component of the ribosome, a large ribonucleoprotein complex responsible for the synthesis of proteins in the cell. The small ribosomal subunit (SSU) binds messenger RNAs (mRNAs) and translates the encoded message by selecting cognate aminoacyl-transfer RNA (tRNA) molecules. The large subunit (LSU) contains the ribosomal catalytic site termed the peptidyl transferase center (PTC), which catalyzes the formation of peptide bonds, thereby polymerizing the amino acids delivered by tRNAs into a polypeptide chain. The nascent polypeptides leave the ribosome through a tunnel in the LSU and interact with protein factors that function in enzymatic processing, targeting, and the membrane insertion of nascent chains at the exit of the ribosomal tunnel. This is Large ribosomal subunit protein uL5 (RPL11) from Chlamydomonas reinhardtii (Chlamydomonas smithii).